The sequence spans 377 residues: Chaperone MoxR1 (377 aa).

Positions 1–33 (MTSAGGFPAGAGGYQTPGGHSASPAHEAPPGGA) are disordered. Over residues 7-16 (FPAGAGGYQT) the composition is skewed to gly residues. Residues 19 to 33 (GHSASPAHEAPPGGA) are compositionally biased toward low complexity. ATP is bound at residue 78-85 (GVPGVAKT).

This sequence belongs to the MoxR family. As to quaternary structure, interacts with RipA. Interacts with host Toll-like receptor 4 (TLR4).

Displays ATP-enhanced chaperone activity. Required for the proper folding of the peptidoglycan endopeptidase RipA and its secretion through the TAT secretion system. In vitro, prevents thermal aggregation of MalZ protein and protects the functional activity of the restriction enzyme NdeI from thermal inactivation. Functionally, could be a moonlighting protein that uses a multipronged approach to dampen host-directed immunity for efficient replication, survival and pathogenesis. Can enhance virulence by inhibiting autophagy and apoptosis, and disrupting cellular bioenergetics. Binds and activates host TLR4 on the surface of macrophage cells, leading to the activation of the host NFKB and MAPK signaling cascades and enhanced secretion of proinflammatory cytokines. Inhibits autophagic flux via activation of PI3K-AKT-MTOR-ULK1 signaling cascade and represses apoptosis via inhibiting protooncogene c-FOS and MAPK JNK1/2. Also induces robust disruption of cellular bioenergetics by metabolic reprogramming to rewire the citric acid cycle intermediates for its benefit. The protein is Chaperone MoxR1 of Mycobacterium tuberculosis (strain ATCC 25618 / H37Rv).